Reading from the N-terminus, the 667-residue chain is Bicarbonate transport ATP-binding protein CmpC (667 aa).

One can recognise an ABC transporter domain in the interval 5 to 239 (VAVDNIDKVF…RPRKRMEVVE (235 aa)). Residue 42-49 (GHSGCGKS) participates in ATP binding. Positions 281–667 (LELGYVPLVA…DNPTPAPVFA (387 aa)) are cmpA-like.

Belongs to the ABC transporter superfamily. Nitrate/nitrite/cyanate uptake transporter (NitT) (TC 3.A.1.16) family. In terms of assembly, the complex is composed of two ATP-binding proteins (CmpC and CmpD), a transmembrane protein (CmpB) and a solute-binding protein (CmpA).

The protein resides in the cell inner membrane. In terms of biological role, part of the ABC transporter complex CmpABCD involved in bicarbonate transport. Responsible for energy coupling to the transport system. The sequence is that of Bicarbonate transport ATP-binding protein CmpC (cmpC) from Synechocystis sp. (strain ATCC 27184 / PCC 6803 / Kazusa).